The sequence spans 213 residues: Riboflavin synthase (213 aa).

2 Lumazine-binding repeats span residues 1-97 and 98-195; these read MFTG…IGGH and LMSG…VDTV. 2,4-dihydroxypteridine is bound by residues 4–6, 48–50, 62–67, 101–103, K137, 146–148, and 160–165; these read GIV, CLT, DLMKET, GHI, SLT, and HLIPET.

As to quaternary structure, homotrimer. Unlike in B.subtilis, does not interact with 6,7-dimethyl-8-ribityllumazine synthase.

The enzyme catalyses 2 6,7-dimethyl-8-(1-D-ribityl)lumazine + H(+) = 5-amino-6-(D-ribitylamino)uracil + riboflavin. The protein operates within cofactor biosynthesis; riboflavin biosynthesis; riboflavin from 2-hydroxy-3-oxobutyl phosphate and 5-amino-6-(D-ribitylamino)uracil: step 2/2. Functionally, catalyzes the dismutation of two molecules of 6,7-dimethyl-8-ribityllumazine, resulting in the formation of riboflavin and 5-amino-6-(D-ribitylamino)uracil. In Escherichia coli (strain K12), this protein is Riboflavin synthase (ribC).